A 466-amino-acid chain; its full sequence is Cysteine--tRNA ligase (466 aa).

Cys-29 contacts Zn(2+). A 'HIGH' region motif is present at residues 31 to 41 (PTVYNYIHIGN). Zn(2+) is bound by residues Cys-209, His-234, and Glu-238. Positions 266–270 (KMSKS) match the 'KMSKS' region motif. Position 269 (Lys-269) interacts with ATP.

Belongs to the class-I aminoacyl-tRNA synthetase family. In terms of assembly, monomer. It depends on Zn(2+) as a cofactor.

Its subcellular location is the cytoplasm. It catalyses the reaction tRNA(Cys) + L-cysteine + ATP = L-cysteinyl-tRNA(Cys) + AMP + diphosphate. In Lysinibacillus sphaericus (strain C3-41), this protein is Cysteine--tRNA ligase.